A 309-amino-acid chain; its full sequence is Probable manganese-dependent inorganic pyrophosphatase (309 aa).

The Mn(2+) site is built by His9, Asp13, Asp15, Asp75, His97, and Asp149.

This sequence belongs to the PPase class C family. Mn(2+) serves as cofactor.

The protein resides in the cytoplasm. The enzyme catalyses diphosphate + H2O = 2 phosphate + H(+). The chain is Probable manganese-dependent inorganic pyrophosphatase from Bacillus anthracis (strain CDC 684 / NRRL 3495).